Consider the following 558-residue polypeptide: Dihydroxy-acid dehydratase (558 aa).

D78 is a binding site for Mg(2+). C119 is a [2Fe-2S] cluster binding site. Residues D120 and K121 each coordinate Mg(2+). Position 121 is an N6-carboxylysine (K121). C192 is a binding site for [2Fe-2S] cluster. E446 provides a ligand contact to Mg(2+). S472 (proton acceptor) is an active-site residue.

It belongs to the IlvD/Edd family. Homodimer. It depends on [2Fe-2S] cluster as a cofactor. Mg(2+) serves as cofactor.

It carries out the reaction (2R)-2,3-dihydroxy-3-methylbutanoate = 3-methyl-2-oxobutanoate + H2O. The enzyme catalyses (2R,3R)-2,3-dihydroxy-3-methylpentanoate = (S)-3-methyl-2-oxopentanoate + H2O. Its pathway is amino-acid biosynthesis; L-isoleucine biosynthesis; L-isoleucine from 2-oxobutanoate: step 3/4. It functions in the pathway amino-acid biosynthesis; L-valine biosynthesis; L-valine from pyruvate: step 3/4. Functions in the biosynthesis of branched-chain amino acids. Catalyzes the dehydration of (2R,3R)-2,3-dihydroxy-3-methylpentanoate (2,3-dihydroxy-3-methylvalerate) into 2-oxo-3-methylpentanoate (2-oxo-3-methylvalerate) and of (2R)-2,3-dihydroxy-3-methylbutanoate (2,3-dihydroxyisovalerate) into 2-oxo-3-methylbutanoate (2-oxoisovalerate), the penultimate precursor to L-isoleucine and L-valine, respectively. This Campylobacter lari (strain RM2100 / D67 / ATCC BAA-1060) protein is Dihydroxy-acid dehydratase.